The primary structure comprises 361 residues: Putative agmatine deiminase (361 aa).

The Amidino-cysteine intermediate role is filled by Cys-354.

This sequence belongs to the agmatine deiminase family.

The enzyme catalyses agmatine + H2O = N-carbamoylputrescine + NH4(+). The polypeptide is Putative agmatine deiminase (Streptococcus pneumoniae (strain 70585)).